A 162-amino-acid chain; its full sequence is Ribosome maturation factor RimP (162 aa).

It belongs to the RimP family.

The protein resides in the cytoplasm. In terms of biological role, required for maturation of 30S ribosomal subunits. The sequence is that of Ribosome maturation factor RimP from Cupriavidus pinatubonensis (strain JMP 134 / LMG 1197) (Cupriavidus necator (strain JMP 134)).